The sequence spans 263 residues: tRNA pseudouridine synthase A (263 aa).

Residue D51 is the Nucleophile of the active site. Residue Y109 coordinates substrate.

It belongs to the tRNA pseudouridine synthase TruA family. Homodimer.

It carries out the reaction uridine(38/39/40) in tRNA = pseudouridine(38/39/40) in tRNA. Functionally, formation of pseudouridine at positions 38, 39 and 40 in the anticodon stem and loop of transfer RNAs. In Mannheimia succiniciproducens (strain KCTC 0769BP / MBEL55E), this protein is tRNA pseudouridine synthase A.